A 34-amino-acid chain; its full sequence is Photosystem II reaction center protein M (34 aa).

The chain crosses the membrane as a helical span at residues 5–25; that stretch reads ILAFIATALFILVPTAFLLII.

Belongs to the PsbM family. PSII is composed of 1 copy each of membrane proteins PsbA, PsbB, PsbC, PsbD, PsbE, PsbF, PsbH, PsbI, PsbJ, PsbK, PsbL, PsbM, PsbT, PsbX, PsbY, PsbZ, Psb30/Ycf12, at least 3 peripheral proteins of the oxygen-evolving complex and a large number of cofactors. It forms dimeric complexes.

It is found in the plastid. It localises to the chloroplast thylakoid membrane. In terms of biological role, one of the components of the core complex of photosystem II (PSII). PSII is a light-driven water:plastoquinone oxidoreductase that uses light energy to abstract electrons from H(2)O, generating O(2) and a proton gradient subsequently used for ATP formation. It consists of a core antenna complex that captures photons, and an electron transfer chain that converts photonic excitation into a charge separation. This subunit is found at the monomer-monomer interface. The sequence is that of Photosystem II reaction center protein M from Calycanthus floridus var. glaucus (Eastern sweetshrub).